The primary structure comprises 203 residues: NAD(P)H dehydrogenase (quinone) (203 aa).

The 192-residue stretch at 3 to 194 (VLIVYYSMYG…AGARFQGRYV (192 aa)) folds into the Flavodoxin-like domain. FMN contacts are provided by residues 9–14 (SMYGHI) and 82–84 (TRF). Tyrosine 11 serves as a coordination point for NAD(+). Position 102 (tryptophan 102) interacts with substrate. FMN is bound by residues 117–123 (SSATQHG) and histidine 138.

Belongs to the WrbA family. Requires FMN as cofactor.

It catalyses the reaction a quinone + NADH + H(+) = a quinol + NAD(+). The enzyme catalyses a quinone + NADPH + H(+) = a quinol + NADP(+). In Geobacter sulfurreducens (strain ATCC 51573 / DSM 12127 / PCA), this protein is NAD(P)H dehydrogenase (quinone).